The following is a 347-amino-acid chain: 5-deoxyribose 1-phosphate isomerase (347 aa).

Substrate contacts are provided by residues Arg-48 to Ala-50, Arg-91, and Gln-198. The active-site Proton donor is the Asp-239. Asn-249–Lys-250 is a binding site for substrate.

It belongs to the EIF-2B alpha/beta/delta subunits family. DrdI subfamily.

It catalyses the reaction 5-deoxy-alpha-D-ribose 1-phosphate = 5-deoxy-D-ribulose 1-phosphate. Its pathway is carbohydrate degradation. Its function is as follows. Catalyzes the isomerization of 5-deoxy-alpha-D-ribose 1-phosphate to 5-deoxy-D-ribulose 1-phosphate, as part of a 5-deoxyribose salvage pathway that recycles this toxic radical SAM enzyme by-product to mainstream metabolites. The polypeptide is 5-deoxyribose 1-phosphate isomerase (Bacillus cereus (strain ATCC 14579 / DSM 31 / CCUG 7414 / JCM 2152 / NBRC 15305 / NCIMB 9373 / NCTC 2599 / NRRL B-3711)).